The chain runs to 591 residues: MSIRGVGGNGNSRIPSHNGDGSNRRSQNTKGNNKVEDRVCSLYSSRSNENRESPYAVVDVSSMIESTPTSGETTRASRGVFSRFQRGLVRVADKVRRAVQCAWSSVSTRRSSATRAAESGSSSRTARGASSGYREYSPSAARGLRLMFTDFWRTRVLRQTSPMAGVFGNLDVNEARLMAAYTSECADHLEANKLAGPDGVAAAREIAKRWEQRVRDLQDKGAARKLLNDPLGRRTPNYQSKNPGEYTVGNSMFYDGPQVANLQNVDTGFWLDMSNLSDVVLSREIQTGLRARATLEESMPMLENLEERFRRLQETCDAARTEIEESGWTRESASRMEGDEAQGPSRAQQAFQSFVNECNSIEFSFGSFGEHVRVLCARVSRGLAAAGEAIRRCFSCCKGSTHRYAPRDDLSPEGASLAETLARFADDMGIERGADGTYDIPLVDDWRRGVPSIEGEGSDSIYEIMMPIYEVMDMDLETRRSFAVQQGHYQDPRASDYDLPRASDYDLPRSPYPTPPLPPRYQLQNMDVEAGFREAVYASFVAGMYNYVVTQPQERIPNSQQVEGILRDMLTNGSQTFRDLMRRWNREVDRE.

The span at 1 to 10 (MSIRGVGGNG) shows a compositional bias: gly residues. Disordered regions lie at residues 1-37 (MSIR…KVED), 110-135 (RSSA…GYRE), 324-344 (EESG…AQGP), and 487-517 (GHYQ…TPPL). The span at 11-32 (NSRIPSHNGDGSNRRSQNTKGN) shows a compositional bias: polar residues. The segment covering 110–132 (RSSATRAAESGSSSRTARGASSG) has biased composition (low complexity). The segment covering 490–507 (QDPRASDYDLPRASDYDL) has biased composition (basic and acidic residues).

It to C.muridarum TC_0268.

This is an uncharacterized protein from Chlamydia trachomatis serovar D (strain ATCC VR-885 / DSM 19411 / UW-3/Cx).